Consider the following 283-residue polypeptide: MVLMIVSGRSGSGKSVALRALEDMGFYCVDNLPVVLLPELANTLADRDISAAVSIDVRNMPESPEVFEEALTKLPASFSPQLLFLDAERNTLIRRYSDTRRLHPLSSKNLSLESAIDQESDLLEPLRSRADLIIDTSEMSVHELAEMLRTRLLGKRERELTMVFESFGFKHGIPIDADYVFDVRFLPNPHWDPKLRPMTGLDRPVAAFLDRHTEVHNFIYQTRSYLELWLPMLETNNRSYLTVAIGCTGGKHRSVYVAEQLADYFRSRGKNVQSRHRTLEKRK.

8–15 serves as a coordination point for ATP; that stretch reads GRSGSGKS. Residue 56 to 59 coordinates GTP; it reads DVRN. The tract at residues 266 to 283 is RNA-binding; it reads RSRGKNVQSRHRTLEKRK.

Belongs to the RapZ-like family. RapZ subfamily. As to quaternary structure, homotrimer.

Its function is as follows. Modulates the synthesis of GlmS, by affecting the processing and stability of the regulatory small RNA GlmZ. When glucosamine-6-phosphate (GlcN6P) concentrations are high in the cell, RapZ binds GlmZ and targets it to cleavage by RNase E. Consequently, GlmZ is inactivated and unable to activate GlmS synthesis. Under low GlcN6P concentrations, RapZ is sequestered and inactivated by an other regulatory small RNA, GlmY, preventing GlmZ degradation and leading to synthesis of GlmS. In Photorhabdus laumondii subsp. laumondii (strain DSM 15139 / CIP 105565 / TT01) (Photorhabdus luminescens subsp. laumondii), this protein is RNase adapter protein RapZ.